Reading from the N-terminus, the 494-residue chain is Tripartite motif-containing protein 5 (494 aa).

Residue Ala2 is modified to N-acetylalanine. The segment at 15–59 adopts an RING-type zinc-finger fold; that stretch reads CPICLELLTEPLSLDCGHSFCQACITANHKESTPHQGERSCPLCR. A Phosphoserine modification is found at Ser86. Residues 91–132 form a B box-type zinc finger; the sequence is QKVGHCARHGEKLLLFCEQDGNVICWLCERSQEHRGHHTLLV. 4 residues coordinate Zn(2+): Cys96, His99, Cys118, and His124. Residues 131-223 are a coiled coil; that stretch reads LVEEVAEKYQ…RLVQSESDMV (93 aa). The tract at residues 186–199 is required for interaction with GABARAP and for autophagy; that stretch reads FKQLRDILDCEESK. In terms of domain architecture, B30.2/SPRY spans 280 to 494; that stretch reads PDLKAMLQAF…LPMTLCSPSS (215 aa).

The protein belongs to the TRIM/RBCC family. In terms of assembly, can form homodimers and homotrimers. In addition to lower-order dimerization, also exhibits a higher-order multimerization and both low- and high-order multimerizations are essential for its restriction activity. Interacts with BTBD1 and BTBD2. Interacts with PSMC4, PSMC5, PSMD7 and HSPA8/HSC70. Interacts (via B30.2/SPRY domain) with HSPA1A/B. Interacts with PSMC2, MAP3K7/TAK1, TAB2 and TAB3. Interacts with SQSTM1. Interacts with TRIM6 and TRIM34. Interacts with ULK1 (phosphorylated form), GABARAP, GABARAPL1, GABARAPL2, MAP1LC3A, MAP1LC3C and BECN1. In terms of processing, degraded in a proteasome-independent fashion in the absence of viral infection but in a proteasome-dependent fashion following exposure to restriction sensitive virus. Autoubiquitinated in a RING finger- and UBE2D2-dependent manner. Monoubiquitinated by TRIM21. Deubiquitinated by Yersinia YopJ. Ubiquitination may not lead to proteasomal degradation.

The protein localises to the cytoplasm. It is found in the nucleus. It carries out the reaction S-ubiquitinyl-[E2 ubiquitin-conjugating enzyme]-L-cysteine + [acceptor protein]-L-lysine = [E2 ubiquitin-conjugating enzyme]-L-cysteine + N(6)-ubiquitinyl-[acceptor protein]-L-lysine.. It functions in the pathway protein modification; protein ubiquitination. Functionally, capsid-specific restriction factor that prevents infection from non-host-adapted retroviruses. Blocks viral replication early in the life cycle, after viral entry but before reverse transcription. In addition to acting as a capsid-specific restriction factor, also acts as a pattern recognition receptor that activates innate immune signaling in response to the retroviral capsid lattice. Binding to the viral capsid triggers its E3 ubiquitin ligase activity, and in concert with the heterodimeric ubiquitin conjugating enzyme complex UBE2V1-UBE2N (also known as UBC13-UEV1A complex) generates 'Lys-63'-linked polyubiquitin chains, which in turn are catalysts in the autophosphorylation of the MAP3K7/TAK1 complex (includes TAK1, TAB2, and TAB3). Activation of the MAP3K7/TAK1 complex by autophosphorylation results in the induction and expression of NF-kappa-B and MAPK-responsive inflammatory genes, thereby leading to an innate immune response in the infected cell. Plays a role in regulating autophagy through activation of autophagy regulator BECN1 by causing its dissociation from its inhibitors BCL2 and TAB2. This Saguinus labiatus (Red-chested mustached tamarin) protein is Tripartite motif-containing protein 5 (TRIM5).